Here is a 158-residue protein sequence, read N- to C-terminus: Large ribosomal subunit protein uL16 (158 aa).

The protein belongs to the universal ribosomal protein uL16 family. Part of the 50S ribosomal subunit.

Binds 23S rRNA and is also seen to make contacts with the A and possibly P site tRNAs. This is Large ribosomal subunit protein uL16 from Prochlorococcus marinus (strain MIT 9313).